A 514-amino-acid chain; its full sequence is Protein farnesyltransferase subunit beta (514 aa).

The span at 1 to 13 (MRHHTKNLRRRAI) shows a compositional bias: basic residues. The tract at residues 1–56 (MRHHTKNLRRRAIFLRTTPRGNMDSSSSVATSTSSSSNHRLVRSSEGSPSAGGDDI) is disordered. The span at 25–39 (SSSSVATSTSSSSNH) shows a compositional bias: low complexity. PFTB repeat units follow at residues 180–221 (AESL…AVVG), 231–272 (RRAL…SLLN), 293–334 (FTGL…SLLG), 346–388 (IERL…PLIE), and 410–454 (REGL…SSAQ). (2E,6E)-farnesyl diphosphate is bound by residues 319–322 (HGAY) and 367–370 (RTNK). Zn(2+) is bound by residues D373 and C375. 376 to 379 (YSHW) lines the (2E,6E)-farnesyl diphosphate pocket. H442 is a Zn(2+) binding site.

This sequence belongs to the protein prenyltransferase subunit beta family. Heterodimer of an alpha and a beta subunit. Interacts with RAS1 and RAS2. Zn(2+) serves as cofactor. As to expression, highly expressed in mycelium, conidium, conidial germination, early formed appressorium and the late infection hypha.

Its subcellular location is the cytoplasm. It catalyses the reaction L-cysteinyl-[protein] + (2E,6E)-farnesyl diphosphate = S-(2E,6E)-farnesyl-L-cysteinyl-[protein] + diphosphate. Functionally, catalyzes the transfer of a farnesyl moiety from farnesyl diphosphate to a cysteine at the fourth position from the C-terminus of several proteins having the C-terminal sequence Cys-aliphatic-aliphatic-X. The beta subunit is responsible for peptide-binding. The polypeptide is Protein farnesyltransferase subunit beta (RAM1) (Pyricularia oryzae (strain 70-15 / ATCC MYA-4617 / FGSC 8958) (Rice blast fungus)).